A 416-amino-acid chain; its full sequence is Transcription factor IIIB 50 kDa subunit (416 aa).

Residues 3–36 form a TFIIB-type zinc finger; sequence NGSRCPDCGSSELVEDSHYSQSQLVCSDCGCVVT. Residues cysteine 7, cysteine 10, cysteine 28, and cysteine 31 each contribute to the Zn(2+) site. Tandem repeats lie at residues 72–157 and 173–249. The interval 108–114 is interaction with target DNA; that stretch reads AARLQKK. The interval 317–385 is disordered; the sequence is AEVETKQQQP…TGDEDISDSE (69 aa). Serine 350 carries the post-translational modification Phosphoserine. The segment at 354–360 is required for the formation of a ternary complex with DNA and TBP; not required for interaction with TBP in the absence of DNA; sequence LLPPCML. Position 358 is a cysteine sulfenic acid (-SOH) (cysteine 358). The segment at 362 to 416 is required for interaction with TBP and formation of a ternary complex with DNA and TBP; that stretch reads PPKRTHTMPPDSVVTGDEDISDSEIEQYLRTPQEVRDFERAQAASRAAMSVPNPP.

It belongs to the TFIIB family. Component of TFIIIB complexes. The TFIIIB complex has two activities, alpha and beta. The TFIIIB-alpha activity complex is composed of TBP, BDP1, and a complex containing both BRF2 and at least four stably associated proteins; this complex inhibits the transcription by pol III via its phosphorylation by CK2; YY1 facilitates the TFIIIB-alpha complex formation. Interacts with TBP; this interaction promotes recruitment of BRF2 to TATA box-containing promoters. Interacts with TBP and the BURE sequence (GC-rich sequence downstream from the TATA box) to form a strong ternary complex which is joined by BDP1; this ternary complex stimulates pol III transcription. Forms a trimeric complex composed of TBP, BRF2 and mini-SNAPc complex (SNAP43, SNAP50, and the N-terminal third of SNAP190) on the promoter. Assembly of the TBP-BRF2 complex is stimulated by SNAP190. Interacts with MAF1 and SNAPC4. Post-translationally, in response to oxidative stress, Cys-358 is reversibly oxidized to cysteine sulfenic acid. Oxidation of Cys-358 impairs formation of a ternary complex with TBP and DNA and down-regulates expression of target genes in response to oxidative stress.

It is found in the nucleus. Its function is as follows. General activator of RNA polymerase III transcription. Factor exclusively required for RNA polymerase III transcription of genes with promoter elements upstream of the initiation sites. Contributes to the regulation of gene expression; functions as activator in the absence of oxidative stress. Down-regulates expression of target genes in response to oxidative stress. Overexpression protects cells against apoptosis in response to oxidative stress. The chain is Transcription factor IIIB 50 kDa subunit (Brf2) from Rattus norvegicus (Rat).